A 336-amino-acid polypeptide reads, in one-letter code: Phenylalanine--tRNA ligase alpha subunit (336 aa).

Residue Glu-259 coordinates Mg(2+).

It belongs to the class-II aminoacyl-tRNA synthetase family. Phe-tRNA synthetase alpha subunit type 1 subfamily. In terms of assembly, tetramer of two alpha and two beta subunits. Mg(2+) serves as cofactor.

The protein localises to the cytoplasm. It carries out the reaction tRNA(Phe) + L-phenylalanine + ATP = L-phenylalanyl-tRNA(Phe) + AMP + diphosphate + H(+). This is Phenylalanine--tRNA ligase alpha subunit from Tropheryma whipplei (strain TW08/27) (Whipple's bacillus).